The chain runs to 129 residues: Small ribosomal subunit protein uS11 (129 aa).

This sequence belongs to the universal ribosomal protein uS11 family. Part of the 30S ribosomal subunit. Interacts with proteins S7 and S18. Binds to IF-3.

Functionally, located on the platform of the 30S subunit, it bridges several disparate RNA helices of the 16S rRNA. Forms part of the Shine-Dalgarno cleft in the 70S ribosome. The chain is Small ribosomal subunit protein uS11 from Listeria innocua serovar 6a (strain ATCC BAA-680 / CLIP 11262).